A 156-amino-acid polypeptide reads, in one-letter code: 6,7-dimethyl-8-ribityllumazine synthase (156 aa).

5-amino-6-(D-ribitylamino)uracil contacts are provided by residues Phe25, 59-61 (AFE), and 83-85 (AVI). 88 to 89 (AT) contacts (2S)-2-hydroxy-3-oxobutyl phosphate. His91 functions as the Proton donor in the catalytic mechanism. Phe116 contributes to the 5-amino-6-(D-ribitylamino)uracil binding site. Arg130 lines the (2S)-2-hydroxy-3-oxobutyl phosphate pocket.

It belongs to the DMRL synthase family.

It carries out the reaction (2S)-2-hydroxy-3-oxobutyl phosphate + 5-amino-6-(D-ribitylamino)uracil = 6,7-dimethyl-8-(1-D-ribityl)lumazine + phosphate + 2 H2O + H(+). It participates in cofactor biosynthesis; riboflavin biosynthesis; riboflavin from 2-hydroxy-3-oxobutyl phosphate and 5-amino-6-(D-ribitylamino)uracil: step 1/2. Its function is as follows. Catalyzes the formation of 6,7-dimethyl-8-ribityllumazine by condensation of 5-amino-6-(D-ribitylamino)uracil with 3,4-dihydroxy-2-butanone 4-phosphate. This is the penultimate step in the biosynthesis of riboflavin. In Nitratidesulfovibrio vulgaris (strain DSM 19637 / Miyazaki F) (Desulfovibrio vulgaris), this protein is 6,7-dimethyl-8-ribityllumazine synthase.